A 142-amino-acid chain; its full sequence is MKTFTAKPESVKRDWYVVDADGKTLGRLATELARRLRGKHKAEYTPHVDTGDYIIVLNAEKVAVTGNKRTDKVYYRHTGYVGGIKQATFEEMIARNPERVIEIAVKGMLPKGPLGRAMFRKLKVYAGTEHTHAAQQPQVLDI.

It belongs to the universal ribosomal protein uL13 family. Part of the 50S ribosomal subunit.

This protein is one of the early assembly proteins of the 50S ribosomal subunit, although it is not seen to bind rRNA by itself. It is important during the early stages of 50S assembly. This is Large ribosomal subunit protein uL13 from Serratia proteamaculans (strain 568).